Consider the following 348-residue polypeptide: Histidinol-phosphate aminotransferase (348 aa).

Lysine 210 is modified (N6-(pyridoxal phosphate)lysine).

This sequence belongs to the class-II pyridoxal-phosphate-dependent aminotransferase family. Histidinol-phosphate aminotransferase subfamily. Homodimer. Pyridoxal 5'-phosphate is required as a cofactor.

It catalyses the reaction L-histidinol phosphate + 2-oxoglutarate = 3-(imidazol-4-yl)-2-oxopropyl phosphate + L-glutamate. The protein operates within amino-acid biosynthesis; L-histidine biosynthesis; L-histidine from 5-phospho-alpha-D-ribose 1-diphosphate: step 7/9. This Pseudomonas putida (strain ATCC 700007 / DSM 6899 / JCM 31910 / BCRC 17059 / LMG 24140 / F1) protein is Histidinol-phosphate aminotransferase.